The following is a 152-amino-acid chain: D-aminoacyl-tRNA deacylase (152 aa).

Residues 137 to 138 carry the Gly-cisPro motif, important for rejection of L-amino acids motif; that stretch reads GP.

It belongs to the DTD family. As to quaternary structure, homodimer.

The protein resides in the cytoplasm. The catalysed reaction is glycyl-tRNA(Ala) + H2O = tRNA(Ala) + glycine + H(+). It catalyses the reaction a D-aminoacyl-tRNA + H2O = a tRNA + a D-alpha-amino acid + H(+). An aminoacyl-tRNA editing enzyme that deacylates mischarged D-aminoacyl-tRNAs. Also deacylates mischarged glycyl-tRNA(Ala), protecting cells against glycine mischarging by AlaRS. Acts via tRNA-based rather than protein-based catalysis; rejects L-amino acids rather than detecting D-amino acids in the active site. By recycling D-aminoacyl-tRNA to D-amino acids and free tRNA molecules, this enzyme counteracts the toxicity associated with the formation of D-aminoacyl-tRNA entities in vivo and helps enforce protein L-homochirality. In Geobacter sulfurreducens (strain ATCC 51573 / DSM 12127 / PCA), this protein is D-aminoacyl-tRNA deacylase.